We begin with the raw amino-acid sequence, 866 residues long: MPENEKEPAQPTTNEDALDTGKTCLQIKELKDKERALMLAENARMQGLSEFFFSRHEDKRLYESKSTNTEDVNKAIYFSYPSRRHSCTLVNIPKPCVNKMISHIEDVESKIQEHLTQFEASFEEWTSVTKDKEAGLDVSAPEKQVHPEKGKDEKCPELKKRMETLLSEAIHLIKSLETDRAEAEQALKQHKSRKKKISMKIDSWSIWKLQELPLAVQKEHENFSKINAELRSYLEDIALKVEQLQERKEKLEKANAKLQVDIDYMASHSVLLEKKRKQELGCLKERYHKKFEVMEKFRAIHEELKESVDKCEGAKARLKNMKVENEREIQEELINATSYEKELDKLSVLDAHYTTSIETVNLDIEGDEEAMNEVLRETQSTTNELENLKKTVDDLKRLFDQYCWRQRKYENEYLEAFSNFYSLKKTWDIELSNVSKDAKDLTIVYEAQSEENKRIQSEIQSITDDIEESIKKTAEMEEEVHTFVEMKMKNNNYLKQLYKQAYQVGAVYHLSRHKTEELEDKLADLKRIFKGREELLKKLTRGDIATGIEIQKRLYAIEETQFIEMQEFIRRQVLYNMALLEVEEQLKELEAEAVRIRYLHRQHSKMLHNIRKRKERVKKNVDATKKKLLKKSKKSRMELTRTEGKRSIIHEEIEIARGQTVALHEKCIELSKEIRIMNLERTNYEERLKKLQEEFFKLQFDREHVHGVYDHLMREKQYCEERIFEEERRFRRLIDMRKNTLKNIRKCQDDLLEENLRLAKEYQSAQLIFLKEKESYFNGYDRLLSLNFSLSDKKKLCQLQKRLDQKWQEYFRLMILFNKTKLAKFQGDSQNSIQKILAVQEESSSLMQHILDFFKSFPNSSCGEDD.

The disordered stretch occupies residues 1–21 (MPENEKEPAQPTTNEDALDTG). 6 coiled-coil regions span residues 157–266 (ELKK…DYMA), 292–403 (EVME…DQYC), 439–480 (KDLT…EEEV), 514–539 (KTEE…LKKL), 570–631 (RRQV…LLKK), and 665–705 (EKCI…REHV).

The protein is Coiled-coil domain-containing protein 178 (Ccdc178) of Mus musculus (Mouse).